The chain runs to 1070 residues: DNA-directed RNA polymerase subunit beta (1070 aa).

Belongs to the RNA polymerase beta chain family. In terms of assembly, in plastids the minimal PEP RNA polymerase catalytic core is composed of four subunits: alpha, beta, beta', and beta''. When a (nuclear-encoded) sigma factor is associated with the core the holoenzyme is formed, which can initiate transcription.

The protein resides in the plastid. It is found in the chloroplast. It carries out the reaction RNA(n) + a ribonucleoside 5'-triphosphate = RNA(n+1) + diphosphate. Its function is as follows. DNA-dependent RNA polymerase catalyzes the transcription of DNA into RNA using the four ribonucleoside triphosphates as substrates. The sequence is that of DNA-directed RNA polymerase subunit beta from Nicotiana sylvestris (Wood tobacco).